The following is a 257-amino-acid chain: Tryptophan synthase alpha chain (257 aa).

Residues glutamate 47 and aspartate 58 each act as proton acceptor in the active site.

This sequence belongs to the TrpA family. As to quaternary structure, tetramer of two alpha and two beta chains.

The enzyme catalyses (1S,2R)-1-C-(indol-3-yl)glycerol 3-phosphate + L-serine = D-glyceraldehyde 3-phosphate + L-tryptophan + H2O. The protein operates within amino-acid biosynthesis; L-tryptophan biosynthesis; L-tryptophan from chorismate: step 5/5. Functionally, the alpha subunit is responsible for the aldol cleavage of indoleglycerol phosphate to indole and glyceraldehyde 3-phosphate. In Listeria monocytogenes serotype 4b (strain F2365), this protein is Tryptophan synthase alpha chain.